A 704-amino-acid chain; its full sequence is Elongation factor G (704 aa).

Residues 8–290 (ARYRNIGISA…AVIDYLPSPV (283 aa)) form the tr-type G domain. Residues 17 to 24 (AHIDAGKT), 88 to 92 (DTPGH), and 142 to 145 (NKMD) contribute to the GTP site. N6-acetyllysine occurs at positions 504 and 643.

Belongs to the TRAFAC class translation factor GTPase superfamily. Classic translation factor GTPase family. EF-G/EF-2 subfamily.

The protein localises to the cytoplasm. Functionally, catalyzes the GTP-dependent ribosomal translocation step during translation elongation. During this step, the ribosome changes from the pre-translocational (PRE) to the post-translocational (POST) state as the newly formed A-site-bound peptidyl-tRNA and P-site-bound deacylated tRNA move to the P and E sites, respectively. Catalyzes the coordinated movement of the two tRNA molecules, the mRNA and conformational changes in the ribosome. The polypeptide is Elongation factor G (Shigella sonnei (strain Ss046)).